Reading from the N-terminus, the 603-residue chain is Nuclear receptor subfamily 2 group C member 1 (603 aa).

Residues 1 to 178 (MATIEEIAHQ…RLQRCIAFGM (178 aa)) form a required for interaction with KAT2B region. Positions 110-185 (FDLCVVCGDK…FGMKQDSVQC (76 aa)) form a DNA-binding region, nuclear receptor. 2 consecutive NR C4-type zinc fingers follow at residues 113–133 (CVVC…CEGC) and 149–168 (CRGS…CQYC). Phosphoserine occurs at positions 197 and 215. Phosphothreonine is present on Thr220. Residue Thr222 is modified to Phosphothreonine; by MAPK1. Residue Lys250 forms a Glycyl lysine isopeptide (Lys-Gly) (interchain with G-Cter in SUMO); alternate linkage. Lys250 participates in a covalent cross-link: Glycyl lysine isopeptide (Lys-Gly) (interchain with G-Cter in SUMO2); alternate. The NR LBD domain maps to 348–590 (GSVHLITGDS…SVIPHILKME (243 aa)). Ser581 carries the post-translational modification Phosphoserine; by PKC. Residues 584 to 603 (PHILKMEPADYNSQIIGHSI) form a required for interaction with NRIP1 region. A Glycyl lysine isopeptide (Lys-Gly) (interchain with G-Cter in SUMO2) cross-link involves residue Lys588.

The protein belongs to the nuclear hormone receptor family. NR2 subfamily. Homodimer. Heterodimer; binds DNA as a heterodimer with NR2C2 required for chromatin remodeling and for binding to promoter regions such as globin DR1 repeats. Interacts with ESR1; the interaction prevents homodimerization of ESR1 and suppresses its transcriptional activity and cell growth. Interacts with NRIP1 (via its LXXLL motifs); the interaction provides corepressor activity. Interacts with HDAC3 (via the DNA-binding domain). Interacts with HDAC4 (via the DNA-binding domain). Interacts with PIAS1; the interaction is required for sumoylation of NR2C1. Interacts with UBE2I; the interaction is required for sumoylation of NR2C1. Interacts with KAT2B; the interaction acts as a corepressor of gene expression. Sumoylation requires both PIAS1 and UBE2I. Sumoylation appears to dissociate NR2C1 from the PML nuclear bodies. Enhances the interaction with NRIP1 but inhibits interaction with KAT2B. In proliferating cells, stimulation by all-trans retinoic acid, activation of MAPK1-mediated phosphorylation and recruitment to PML bodies with subsequent sumoylation, suppresses OCT4 expression. Post-translationally, phosphorylated on several serine and threonine residues. Phosphorylation on Thr-220, stimulated by all-trans retinoic acid (atRA) mediates PML location and sumoylation in proliferating cells which then modulates its association with effector molecules, KAT2B and NRIP1. Phosphorylation on Ser-581 by PKC is important for protein stability and function as activator of RARB.

The protein localises to the nucleus. Its subcellular location is the PML body. Its function is as follows. Orphan nuclear receptor. Binds the IR7 element in the promoter of its own gene in an autoregulatory negative feedback mechanism. Primarily repressor of a broad range of genes. Binds to hormone response elements (HREs) consisting of two 5'-AGGTCA-3' half site direct repeat consensus sequences. Together with NR2C2, forms the core of the DRED (direct repeat erythroid-definitive) complex that represses embryonic and fetal globin transcription. Also activator of OCT4 gene expression. May be involved in stem cell proliferation and differentiation. Mediator of retinoic acid-regulated preadipocyte proliferation. In Macaca fascicularis (Crab-eating macaque), this protein is Nuclear receptor subfamily 2 group C member 1 (NR2C1).